A 333-amino-acid chain; its full sequence is Phenylalanine--tRNA ligase alpha subunit (333 aa).

Residue glutamate 248 participates in Mg(2+) binding.

It belongs to the class-II aminoacyl-tRNA synthetase family. Phe-tRNA synthetase alpha subunit type 1 subfamily. As to quaternary structure, tetramer of two alpha and two beta subunits. Mg(2+) serves as cofactor.

Its subcellular location is the cytoplasm. The catalysed reaction is tRNA(Phe) + L-phenylalanine + ATP = L-phenylalanyl-tRNA(Phe) + AMP + diphosphate + H(+). The polypeptide is Phenylalanine--tRNA ligase alpha subunit (Ureaplasma urealyticum serovar 10 (strain ATCC 33699 / Western)).